A 273-amino-acid polypeptide reads, in one-letter code: Putative phosphoenolpyruvate synthase regulatory protein (273 aa).

154-161 is a binding site for ADP; sequence GVSRSGKT.

The protein belongs to the pyruvate, phosphate/water dikinase regulatory protein family. PSRP subfamily.

The enzyme catalyses [pyruvate, water dikinase] + ADP = [pyruvate, water dikinase]-phosphate + AMP + H(+). The catalysed reaction is [pyruvate, water dikinase]-phosphate + phosphate + H(+) = [pyruvate, water dikinase] + diphosphate. Functionally, bifunctional serine/threonine kinase and phosphorylase involved in the regulation of the phosphoenolpyruvate synthase (PEPS) by catalyzing its phosphorylation/dephosphorylation. The protein is Putative phosphoenolpyruvate synthase regulatory protein of Neisseria meningitidis serogroup C (strain 053442).